An 82-amino-acid chain; its full sequence is Small ribosomal subunit protein bS18 (82 aa).

The segment at 1–20 (MVDINQIPTRRPFHRRRKTC) is disordered.

The protein belongs to the bacterial ribosomal protein bS18 family. As to quaternary structure, part of the 30S ribosomal subunit. Forms a tight heterodimer with protein bS6.

Binds as a heterodimer with protein bS6 to the central domain of the 16S rRNA, where it helps stabilize the platform of the 30S subunit. The protein is Small ribosomal subunit protein bS18 of Chelativorans sp. (strain BNC1).